A 245-amino-acid chain; its full sequence is GDSL esterase/lipase At4g16220 (245 aa).

Positions 1–24 are cleaved as a signal peptide; the sequence is MSSLVSRCQVIALLVLFFFGVCLA. The active-site Nucleophile is S37.

This sequence belongs to the 'GDSL' lipolytic enzyme family.

It is found in the secreted. The protein is GDSL esterase/lipase At4g16220 of Arabidopsis thaliana (Mouse-ear cress).